The chain runs to 161 residues: MTLSIIVAHDKQRVIGYQNQLPWHLPNDLKHVKQLTTGNTLVMGRKTFNSIGKPLPNRRNVVLTNQASFHHEGVDVINSLDEIKELSGHVFIFGGQTLFEAMIDQVDDMYITVIDGKFQGDTFFPPYTFENWEVESSVEGQLDEKNTIPHTFLHLVRRKGK.

In terms of domain architecture, DHFR spans 2–157; that stretch reads TLSIIVAHDK…IPHTFLHLVR (156 aa). 6–8 lines the substrate pocket; it reads IVA. NADP(+) is bound by residues 7–8 and 15–20; these read VA and IGYQNQ. Residue Asp-28 participates in substrate binding. Residue 44–47 participates in NADP(+) binding; it reads GRKT. Arg-58 is a substrate binding site. Residues 63–66 and 93–98 contribute to the NADP(+) site; these read LTNQ and FGGQTL. Substrate is bound at residue Thr-112.

This sequence belongs to the dihydrofolate reductase family.

It carries out the reaction (6S)-5,6,7,8-tetrahydrofolate + NADP(+) = 7,8-dihydrofolate + NADPH + H(+). Its pathway is cofactor biosynthesis; tetrahydrofolate biosynthesis; 5,6,7,8-tetrahydrofolate from 7,8-dihydrofolate: step 1/1. In terms of biological role, key enzyme in folate metabolism. Catalyzes an essential reaction for de novo glycine and purine synthesis, and for DNA precursor synthesis. The polypeptide is Dihydrofolate reductase (folA) (Staphylococcus epidermidis).